The primary structure comprises 124 residues: NADH dehydrogenase [ubiquinone] iron-sulfur protein 6, mitochondrial (124 aa).

A mitochondrion-targeting transit peptide spans 1–28 (MAAAMTFCRLLNRCGEAARSLPLGARCF). Position 98 is an N6-acetyllysine (Lys-98).

This sequence belongs to the complex I NDUFS6 subunit family. As to quaternary structure, mammalian complex I is composed of 45 different subunits. This is a component of the iron-sulfur (IP) fragment of the enzyme.

The protein localises to the mitochondrion inner membrane. Accessory subunit of the mitochondrial membrane respiratory chain NADH dehydrogenase (Complex I), that is believed not to be involved in catalysis. Complex I functions in the transfer of electrons from NADH to the respiratory chain. The immediate electron acceptor for the enzyme is believed to be ubiquinone. The protein is NADH dehydrogenase [ubiquinone] iron-sulfur protein 6, mitochondrial (NDUFS6) of Homo sapiens (Human).